A 445-amino-acid polypeptide reads, in one-letter code: Probable fructoselysine/psicoselysine transporter FrlA (445 aa).

Helical transmembrane passes span 10-30 (LGFW…GIFV), 38-58 (AAGT…IVIP), 93-113 (GWAS…LAIV), 121-141 (PIDP…FMLL), 155-175 (LITI…IFWF), 181-201 (AAPT…LAGI), 236-256 (CLLV…LMPF), 273-293 (IPAL…IVIL), 334-354 (IILQ…TSLL), 355-375 (GYFT…IIWC), 389-410 (AFGL…STFV), and 417-435 (LICA…AFWA).

Belongs to the amino acid-polyamine-organocation (APC) superfamily.

Its subcellular location is the cell inner membrane. The catalysed reaction is N(6)-(D-fructosyl)-L-lysine(in) = N(6)-(D-fructosyl)-L-lysine(out). It carries out the reaction N(6)-(D-psicosyl)-L-lysine(in) = N(6)-(D-psicosyl)-L-lysine(out). It participates in carbohydrate metabolism; fructoselysine degradation. Its function is as follows. Is likely involved in the transport of fructoselysine and psicoselysine to the cytoplasm, where they are degraded. In Escherichia coli (strain K12), this protein is Probable fructoselysine/psicoselysine transporter FrlA.